The primary structure comprises 583 residues: Estrogen receptor (583 aa).

Residues methionine 1–phenylalanine 138 are modulating. 2 NR C4-type zinc fingers span residues cysteine 139–cysteine 159 and cysteine 175–cysteine 199. The nuclear receptor DNA-binding region spans cysteine 139 to methionine 204. A hinge region spans residues methionine 205 to methionine 265. The interval glutamate 220 to asparagine 263 is disordered. Residues proline 266–histidine 501 form the NR LBD domain. The interval proline 506–proline 583 is disordered. Residues alanine 539 to serine 551 show a composition bias toward low complexity.

The protein belongs to the nuclear hormone receptor family. NR3 subfamily. In terms of assembly, binds DNA as a homodimer. Can form a heterodimer with ER-beta.

Its subcellular location is the nucleus. In terms of biological role, the steroid hormones and their receptors are involved in the regulation of eukaryotic gene expression and affect cellular proliferation and differentiation in target tissues. The chain is Estrogen receptor (esr1) from Oreochromis aureus (Israeli tilapia).